Reading from the N-terminus, the 199-residue chain is Large ribosomal subunit protein uL13A (199 aa).

Serine 2 carries the post-translational modification N-acetylserine. Lysine 177 is covalently cross-linked (Glycyl lysine isopeptide (Lys-Gly) (interchain with G-Cter in ubiquitin)).

It belongs to the universal ribosomal protein uL13 family. As to quaternary structure, component of the large ribosomal subunit (LSU). Mature yeast ribosomes consist of a small (40S) and a large (60S) subunit. The 40S small subunit contains 1 molecule of ribosomal RNA (18S rRNA) and 33 different proteins (encoded by 57 genes). The large 60S subunit contains 3 rRNA molecules (25S, 5.8S and 5S rRNA) and 46 different proteins (encoded by 81 genes). N-terminally acetylated by acetyltransferase NatA.

The protein resides in the cytoplasm. Its function is as follows. Component of the ribosome, a large ribonucleoprotein complex responsible for the synthesis of proteins in the cell. The small ribosomal subunit (SSU) binds messenger RNAs (mRNAs) and translates the encoded message by selecting cognate aminoacyl-transfer RNA (tRNA) molecules. The large subunit (LSU) contains the ribosomal catalytic site termed the peptidyl transferase center (PTC), which catalyzes the formation of peptide bonds, thereby polymerizing the amino acids delivered by tRNAs into a polypeptide chain. The nascent polypeptides leave the ribosome through a tunnel in the LSU and interact with protein factors that function in enzymatic processing, targeting, and the membrane insertion of nascent chains at the exit of the ribosomal tunnel. The protein is Large ribosomal subunit protein uL13A of Saccharomyces cerevisiae (strain ATCC 204508 / S288c) (Baker's yeast).